A 140-amino-acid chain; its full sequence is Gonadotropin subunit beta-2 (140 aa).

An N-terminal signal peptide occupies residues 1-23 (MSVPASSFLLLCFLMNSFSPAQS). 6 disulfide bridges follow: Cys-29-Cys-77, Cys-43-Cys-92, Cys-46-Cys-130, Cys-54-Cys-108, Cys-58-Cys-110, and Cys-113-Cys-120. A glycan (N-linked (GlcNAc...) asparagine) is linked at Asn-33.

This sequence belongs to the glycoprotein hormones subunit beta family. Heterodimer of an alpha and a beta chain.

It localises to the secreted. Involved in gametogenesis and steroidogenesis. The sequence is that of Gonadotropin subunit beta-2 (cgbb) from Ictalurus punctatus (Channel catfish).